The chain runs to 78 residues: RNA-binding protein Hfq (78 aa).

The region spanning 10–69 is the Sm domain; it reads DPFLNTLRKEHVPVSIYLVNGIKLQGQIESFDQYVVLLRNTVTQMVYKHAISTVVPARAV.

It belongs to the Hfq family. As to quaternary structure, homohexamer.

RNA chaperone that binds small regulatory RNA (sRNAs) and mRNAs to facilitate mRNA translational regulation in response to envelope stress, environmental stress and changes in metabolite concentrations. Also binds with high specificity to tRNAs. This is RNA-binding protein Hfq from Bordetella petrii (strain ATCC BAA-461 / DSM 12804 / CCUG 43448).